Here is a 91-residue protein sequence, read N- to C-terminus: Acyl carrier protein (91 aa).

The Carrier domain occupies 6-81 (EEIIAELGQI…DIVAYIQKLE (76 aa)). The residue at position 41 (serine 41) is an O-(pantetheine 4'-phosphoryl)serine.

It belongs to the acyl carrier protein (ACP) family. In terms of processing, 4'-phosphopantetheine is transferred from CoA to a specific serine of apo-ACP by AcpS. This modification is essential for activity because fatty acids are bound in thioester linkage to the sulfhydryl of the prosthetic group.

The protein localises to the cytoplasm. Its pathway is lipid metabolism; fatty acid biosynthesis. Carrier of the growing fatty acid chain in fatty acid biosynthesis. The polypeptide is Acyl carrier protein (Rhodococcus erythropolis (strain PR4 / NBRC 100887)).